Here is a 193-residue protein sequence, read N- to C-terminus: Protein B4 (193 aa).

3 helical membrane-spanning segments follow: residues 15-35 (FFVC…CVFF), 36-56 (CVYF…VFFV), and 160-180 (LSLC…IVFS).

It localises to the host membrane. The protein is Protein B4 (B4) of Homo sapiens (Human).